Reading from the N-terminus, the 609-residue chain is Threonine--tRNA ligase (609 aa).

The interval 1–145 (MRLLLIHSDY…TIVPGAGAAV (145 aa)) is editing domain. The interval 194–485 (IHVDLMRSKE…TANQSVPQLP (292 aa)) is catalytic. Zn(2+) contacts are provided by Cys286, His338, and His458.

This sequence belongs to the class-II aminoacyl-tRNA synthetase family. As to quaternary structure, homodimer. The cofactor is Zn(2+).

The protein resides in the cytoplasm. It catalyses the reaction tRNA(Thr) + L-threonine + ATP = L-threonyl-tRNA(Thr) + AMP + diphosphate + H(+). In terms of biological role, catalyzes the attachment of threonine to tRNA(Thr) in a two-step reaction: L-threonine is first activated by ATP to form Thr-AMP and then transferred to the acceptor end of tRNA(Thr). Also edits incorrectly charged L-seryl-tRNA(Thr). The sequence is that of Threonine--tRNA ligase from Methanosphaerula palustris (strain ATCC BAA-1556 / DSM 19958 / E1-9c).